The sequence spans 228 residues: Small ribosomal subunit protein uS3 (228 aa).

The KH type-2 domain occupies 39–107 (VREYLQDKLK…PVHINIEEIR (69 aa)).

The protein belongs to the universal ribosomal protein uS3 family. In terms of assembly, part of the 30S ribosomal subunit. Forms a tight complex with proteins S10 and S14.

Binds the lower part of the 30S subunit head. Binds mRNA in the 70S ribosome, positioning it for translation. This chain is Small ribosomal subunit protein uS3, found in Pseudomonas aeruginosa (strain UCBPP-PA14).